A 645-amino-acid chain; its full sequence is Threonine--tRNA ligase (645 aa).

The TGS domain occupies 1 to 61 (MPAITLPDGS…SSDASVKFIT (61 aa)). The catalytic stretch occupies residues 243-536 (DHRRIGREMD…LIEQYAGKFP (294 aa)). The Zn(2+) site is built by cysteine 336, histidine 387, and histidine 513.

Belongs to the class-II aminoacyl-tRNA synthetase family. As to quaternary structure, homodimer. Requires Zn(2+) as cofactor.

The protein localises to the cytoplasm. The enzyme catalyses tRNA(Thr) + L-threonine + ATP = L-threonyl-tRNA(Thr) + AMP + diphosphate + H(+). In terms of biological role, catalyzes the attachment of threonine to tRNA(Thr) in a two-step reaction: L-threonine is first activated by ATP to form Thr-AMP and then transferred to the acceptor end of tRNA(Thr). Also edits incorrectly charged L-seryl-tRNA(Thr). The polypeptide is Threonine--tRNA ligase (Gluconobacter oxydans (strain 621H) (Gluconobacter suboxydans)).